A 540-amino-acid chain; its full sequence is DNA-(apurinic or apyrimidinic site) endonuclease (540 aa).

2 residues coordinate Mg(2+): N206 and E239. The segment at 256 to 276 (NNKVYGGKKNEGEERNRGSVK) is disordered. Residues 263-276 (KKNEGEERNRGSVK) are compositionally biased toward basic and acidic residues. Residues D400, N402, D530, and H531 each coordinate Mg(2+). Catalysis depends on H531, which acts as the Proton acceptor.

This sequence belongs to the DNA repair enzymes AP/ExoA family. Requires Mg(2+) as cofactor. It depends on Mn(2+) as a cofactor. Post-translationally, may be proteolytically cleaved.

It localises to the mitochondrion. The catalysed reaction is Exonucleolytic cleavage in the 3'- to 5'-direction to yield nucleoside 5'-phosphates.. Functionally, multifunctional protein that plays a central role in mitochondrial DNA base excision repair pathway induced by oxidative stress. Has apurinic/apyrimidinic (AP) endonuclease activity towards double-stranded DNA (dsDNA). Has nucleotide incision repair (NIR) activity; acts on dsDNA with oxidized bases thymine glycol and 5,6-dihydro-2'-deoxyuridine. Has 3'-5' exonuclease; can use dsDNA templates with 3'-OH termini including blunt-end, gapped and mismatched 3'-recessed. Has 3'-phosphatase activity; cleaves 3'-phosphate from blunt, recessed and gapped dsDNA templates, followed by 3'-5' exonuclease activity. Has RNase H-like activity; cleaves RNA on 3'-recessed RNA-DNA duplex. Plays a role in merosome infection of host erythrocytes. This chain is DNA-(apurinic or apyrimidinic site) endonuclease, found in Plasmodium berghei (strain Anka).